A 141-amino-acid chain; its full sequence is Large ribosomal subunit protein uL11 (141 aa).

This sequence belongs to the universal ribosomal protein uL11 family. Part of the ribosomal stalk of the 50S ribosomal subunit. Interacts with L10 and the large rRNA to form the base of the stalk. L10 forms an elongated spine to which L12 dimers bind in a sequential fashion forming a multimeric L10(L12)X complex. Post-translationally, one or more lysine residues are methylated.

In terms of biological role, forms part of the ribosomal stalk which helps the ribosome interact with GTP-bound translation factors. The chain is Large ribosomal subunit protein uL11 from Synechococcus sp. (strain CC9311).